Reading from the N-terminus, the 247-residue chain is MSNQACFSNPGPELWNALGWHPSSEQLEQMIALQALLRQWNARVNLTRLVEGGDYWILQVFDSLWPLQSELQNAQQPRRCIDIGSGGGFPGLVLAIALPGASITLVDSVGRKTAALKAMAAKLGLTSRVTVRSERAELTGQDHCCRGLFDLAMARAVSTAPVVAEYLVPLLKPSGEALLFRGHWSPNDAKDLAKALRFLQADLIKMERRELPDNRGVRHQLRLRATLPCPATFPRPIGVPAKNPLGS.

Residues glycine 84, phenylalanine 89, 136–137 (AE), and arginine 155 each bind S-adenosyl-L-methionine.

It belongs to the methyltransferase superfamily. RNA methyltransferase RsmG family.

The protein resides in the cytoplasm. Functionally, specifically methylates the N7 position of a guanine in 16S rRNA. This Prochlorococcus marinus (strain MIT 9303) protein is Ribosomal RNA small subunit methyltransferase G.